Here is a 438-residue protein sequence, read N- to C-terminus: Coenzyme A disulfide reductase (438 aa).

8–33 is a binding site for FAD; that stretch reads GAVAGGATCASQIRRLDKESDIIIFE. Positions 15, 19, 22, 39, and 42 each coordinate substrate. Cysteine 43 functions as the Nucleophile in the catalytic mechanism. The active-site Redox-active is the cysteine 43. Position 71 (lysine 71) interacts with substrate. 151–166 is an NADP(+) binding site; the sequence is VLVVGAGYVSLEVLEN. Position 267-277 (267-277) interacts with FAD; the sequence is TNVPNIYAIGD. Histidine 299 lines the substrate pocket. Residue tyrosine 419 coordinates FAD. Lysine 427 lines the substrate pocket.

The protein belongs to the class-III pyridine nucleotide-disulfide oxidoreductase family. In terms of assembly, homodimer. FAD is required as a cofactor.

The catalysed reaction is NADP(+) + 2 CoA = CoA-disulfide + NADPH + H(+). Its function is as follows. Catalyzes specifically the NADPH-dependent reduction of coenzyme A disulfide. This is Coenzyme A disulfide reductase from Staphylococcus aureus (strain USA300).